The following is a 673-amino-acid chain: Sodium/myo-inositol cotransporter 2 (673 aa).

The Extracellular portion of the chain corresponds to 1 to 27; sequence MESATISPQPPQSDSLEAFPQKSMEPA. The chain crosses the membrane as a helical span at residues 28 to 48; the sequence is DIAVLVLYFLFVLAVGLWSTV. Residues 49–65 lie on the Cytoplasmic side of the membrane; it reads RTKRDTVKGYFLAGGDM. Residues 66-88 traverse the membrane as a helical segment; it reads VWWPVGASLFASNVGSGHFIGLA. Residues 89–102 are Extracellular-facing; that stretch reads GSGAAVGISVAAYE. A helical transmembrane segment spans residues 103–123; sequence LNGLFSVLMLAWVFLPIYIAG. Topologically, residues 124–148 are cytoplasmic; sequence QVTTMPEYLRRRFGGNRISITLAVL. A helical membrane pass occupies residues 149 to 169; it reads YLFIYIFTKISVDMYAGAIFI. At 170-180 the chain is on the extracellular side; that stretch reads QQSLHLDLYLA. The chain crosses the membrane as a helical span at residues 181–201; the sequence is IVGLLAITALYTVAGGLAAVI. Residues 202-208 lie on the Cytoplasmic side of the membrane; it reads YTDALQT. A helical membrane pass occupies residues 209 to 229; that stretch reads VIMLIGAFILMGYSFAAVGGM. The Extracellular segment spans residues 230–272; sequence EGLKDQYFLALASNRSENSSCGLPREDAFHIFRDPLTSDLPWP. The helical transmembrane segment at 273–293 threads the bilayer; that stretch reads GILFGMSIPSLWYWCTDQVIV. The Cytoplasmic portion of the chain corresponds to 294-308; it reads QRSLAAKNLSHAKGG. The chain crosses the membrane as a helical span at residues 309-329; the sequence is SLMAAYLKVLPLFLMVFPGMV. The Extracellular portion of the chain corresponds to 330-375; that stretch reads SRVLFPDQVACAHPDICQRVCSNPSGCSDIAYPKLVLELLPTGLRG. A helical membrane pass occupies residues 376 to 396; sequence LMMAVMVAALMSSLTSIFNSA. Topologically, residues 397–418 are cytoplasmic; it reads STIFTMDLWNHIRPRASERELM. A helical membrane pass occupies residues 419 to 439; the sequence is IVGRIFVFALVLVSILWIPIV. Topologically, residues 440–446 are extracellular; it reads QASQGGQ. A helical membrane pass occupies residues 447 to 467; the sequence is LFIYIQSISSYLQPPVAMVFI. Topologically, residues 468-479 are cytoplasmic; sequence MGCFWKRTNEKG. A helical transmembrane segment spans residues 480–500; it reads AFSGLILGLLLGLVRLILDFV. At 501–521 the chain is on the extracellular side; sequence YAQPRCDQPDDRPAVVKDVHY. Residues 522 to 542 form a helical membrane-spanning segment; sequence LYFSMILSFTTLITVVTVSWF. Topologically, residues 543–652 are cytoplasmic; sequence TETPSKEMVS…SLEENPLVKT (110 aa). A helical transmembrane segment spans residues 653-673; the sequence is LLDVNCIVCISCAIFLWGYFA.

It belongs to the sodium:solute symporter (SSF) (TC 2.A.21) family.

Its subcellular location is the membrane. It localises to the apical cell membrane. It carries out the reaction myo-inositol(out) + 2 Na(+)(out) = myo-inositol(in) + 2 Na(+)(in). The catalysed reaction is 1D-chiro-inositol(out) + 2 Na(+)(out) = 1D-chiro-inositol(in) + 2 Na(+)(in). The enzyme catalyses D-glucose(out) + 2 Na(+)(out) = D-glucose(in) + 2 Na(+)(in). It catalyses the reaction D-xylose(out) + 2 Na(+)(out) = D-xylose(in) + 2 Na(+)(in). Its activity is regulated as follows. MI transport activity inhibited by D-chiro-inositol (DCI), phlorizin (Pz) and sodium (Na(+)). Insulin increases D-chiro-inositol uptake. In terms of biological role, involved in the sodium-dependent cotransport of myo-inositol (MI) with a Na(+):MI stoichiometry of 2:1. Exclusively responsible for apical MI transport and absorption in intestine. Can also transport D-chiro-inositol (DCI) but not L-fucose. Exhibits stereospecific cotransport of both D-glucose and D-xylose. May induce apoptosis through the TNF-alpha, PDCD1 pathway. May play a role in the regulation of MI concentration in serum, involving reabsorption in at least the proximal tubule of the kidney. The chain is Sodium/myo-inositol cotransporter 2 from Mus musculus (Mouse).